A 128-amino-acid polypeptide reads, in one-letter code: MMDAARKILERLEKRGYKIIEREKVRGESGIEHTFDAVILGPQGKRIAVTILERLGFEHVIPLLAFRNDHRMPHIVFAKEIEVGVEKILKNSNIVVIHLKDLSVAYDHPELREEQVLEKVLKLLEDTT.

This is an uncharacterized protein from Archaeoglobus fulgidus (strain ATCC 49558 / DSM 4304 / JCM 9628 / NBRC 100126 / VC-16).